A 299-amino-acid chain; its full sequence is Coenzyme PQQ synthesis protein B (299 aa).

It belongs to the PqqB family.

The protein operates within cofactor biosynthesis; pyrroloquinoline quinone biosynthesis. Its function is as follows. May be involved in the transport of PQQ or its precursor to the periplasm. The protein is Coenzyme PQQ synthesis protein B of Methylorubrum extorquens (strain CM4 / NCIMB 13688) (Methylobacterium extorquens).